The sequence spans 210 residues: Hydrogenase expression/formation protein HupD (210 aa).

Residues E22, D68, and H99 each contribute to the Ni(2+) site.

This sequence belongs to the peptidase A31 family.

Its function is as follows. Not known. Could be involved in the processing of hydrogenase. The protein is Hydrogenase expression/formation protein HupD (hupD) of Rhodobacter capsulatus (Rhodopseudomonas capsulata).